A 133-amino-acid chain; its full sequence is Small ribosomal subunit protein uS8 (133 aa).

It belongs to the universal ribosomal protein uS8 family. As to quaternary structure, part of the 30S ribosomal subunit. Contacts proteins S5 and S12.

In terms of biological role, one of the primary rRNA binding proteins, it binds directly to 16S rRNA central domain where it helps coordinate assembly of the platform of the 30S subunit. The sequence is that of Small ribosomal subunit protein uS8 from Chlamydia felis (strain Fe/C-56) (Chlamydophila felis).